An 84-amino-acid chain; its full sequence is UPF0473 protein CPF_2030 (84 aa).

The protein belongs to the UPF0473 family.

In Clostridium perfringens (strain ATCC 13124 / DSM 756 / JCM 1290 / NCIMB 6125 / NCTC 8237 / Type A), this protein is UPF0473 protein CPF_2030.